Consider the following 194-residue polypeptide: Early growth response protein 1 (194 aa).

3 C2H2-type zinc fingers span residues 1-18 (CDRR…IRIH), 24-46 (FQCR…IRTH), and 52-74 (FACD…TKIH).

The protein belongs to the EGR C2H2-type zinc-finger protein family.

It is found in the nucleus. It localises to the cytoplasm. In terms of biological role, transcriptional regulator. Recognizes and binds to the DNA sequence 5'-GCG(T/G)GGGCG-3'(EGR-site) in the promoter region of target genes. Binds double-stranded target DNA, irrespective of the cytosine methylation status. Regulates the transcription of numerous target genes, and thereby plays an important role in regulating the response to growth factors, DNA damage, and ischemia. Plays a role in the regulation of cell survival, proliferation and cell death. Mediates responses to ischemia and hypoxia; regulates the expression of proteins that are involved in inflammatory processes. Plays a role in regulating the expression of circadian clock genes. The sequence is that of Early growth response protein 1 (EGR1) from Gallus gallus (Chicken).